The primary structure comprises 271 residues: Dermonecrotic toxin LhSicTox-alphaIA2bv (271 aa).

His3 is a catalytic residue. The Mg(2+) site is built by Glu23 and Asp25. 2 cysteine pairs are disulfide-bonded: Cys43–Cys49 and Cys45–Cys188. Position 83 (Asp83) interacts with Mg(2+).

Belongs to the arthropod phospholipase D family. Class II subfamily. It depends on Mg(2+) as a cofactor. Expressed by the venom gland.

The protein localises to the secreted. It catalyses the reaction an N-(acyl)-sphingosylphosphocholine = an N-(acyl)-sphingosyl-1,3-cyclic phosphate + choline. The catalysed reaction is an N-(acyl)-sphingosylphosphoethanolamine = an N-(acyl)-sphingosyl-1,3-cyclic phosphate + ethanolamine. The enzyme catalyses a 1-acyl-sn-glycero-3-phosphocholine = a 1-acyl-sn-glycero-2,3-cyclic phosphate + choline. It carries out the reaction a 1-acyl-sn-glycero-3-phosphoethanolamine = a 1-acyl-sn-glycero-2,3-cyclic phosphate + ethanolamine. Dermonecrotic toxins cleave the phosphodiester linkage between the phosphate and headgroup of certain phospholipids (sphingolipid and lysolipid substrates), forming an alcohol (often choline) and a cyclic phosphate. This toxin acts on sphingomyelin (SM). It may also act on ceramide phosphoethanolamine (CPE), lysophosphatidylcholine (LPC) and lysophosphatidylethanolamine (LPE), but not on lysophosphatidylserine (LPS), and lysophosphatidylglycerol (LPG). It acts by transphosphatidylation, releasing exclusively cyclic phosphate products as second products. Induces dermonecrosis, hemolysis, increased vascular permeability, edema, inflammatory response, and platelet aggregation. The polypeptide is Dermonecrotic toxin LhSicTox-alphaIA2bv (Loxosceles hirsuta (Recluse spider)).